Here is a 184-residue protein sequence, read N- to C-terminus: Ribosome-recycling factor (184 aa).

Belongs to the RRF family.

The protein localises to the cytoplasm. Functionally, responsible for the release of ribosomes from messenger RNA at the termination of protein biosynthesis. May increase the efficiency of translation by recycling ribosomes from one round of translation to another. This is Ribosome-recycling factor from Stenotrophomonas maltophilia (strain R551-3).